The primary structure comprises 358 residues: Peptide chain release factor 1 (358 aa).

An N5-methylglutamine modification is found at Gln-233.

This sequence belongs to the prokaryotic/mitochondrial release factor family. Methylated by PrmC. Methylation increases the termination efficiency of RF1.

It is found in the cytoplasm. Functionally, peptide chain release factor 1 directs the termination of translation in response to the peptide chain termination codons UAG and UAA. This Clostridium botulinum (strain Okra / Type B1) protein is Peptide chain release factor 1.